Here is a 130-residue protein sequence, read N- to C-terminus: Small ribosomal subunit protein uS8 (130 aa).

This sequence belongs to the universal ribosomal protein uS8 family. As to quaternary structure, part of the 30S ribosomal subunit. Contacts proteins S5 and S12.

In terms of biological role, one of the primary rRNA binding proteins, it binds directly to 16S rRNA central domain where it helps coordinate assembly of the platform of the 30S subunit. This is Small ribosomal subunit protein uS8 from Alteromonas mediterranea (strain DSM 17117 / CIP 110805 / LMG 28347 / Deep ecotype).